We begin with the raw amino-acid sequence, 286 residues long: Cytochrome c oxidase subunit 3 (286 aa).

A run of 8 helical transmembrane segments spans residues 13-33, 40-60, 85-105, 133-153, 173-195, 199-221, 223-243, and 253-273; these read GVFLFLSYTPLYITYLLGVVI, VGTFAITLDIILCILVVCFLI, IIQYCFLWFVFSEFMLFVVFF, IILDLGYIFYWFLFDFFNIIL, LCREYLLSKIILGSSIFLGLLFI, VWEFNILIITLSVNIFCTILFSI, TLHFMHVLVGIVFMIISIFNI, and IVLIVCIIFYWHFVDIVWFFL.

This sequence belongs to the cytochrome c oxidase subunit 3 family. Component of the cytochrome c oxidase (complex IV, CIV), a multisubunit enzyme composed of a catalytic core of 3 subunits and several supernumerary subunits. The complex exists as a monomer or a dimer and forms supercomplexes (SCs) in the inner mitochondrial membrane with ubiquinol-cytochrome c oxidoreductase (cytochrome b-c1 complex, complex III, CIII).

It localises to the mitochondrion inner membrane. It carries out the reaction 4 Fe(II)-[cytochrome c] + O2 + 8 H(+)(in) = 4 Fe(III)-[cytochrome c] + 2 H2O + 4 H(+)(out). Its function is as follows. Component of the cytochrome c oxidase, the last enzyme in the mitochondrial electron transport chain which drives oxidative phosphorylation. The respiratory chain contains 3 multisubunit complexes succinate dehydrogenase (complex II, CII), ubiquinol-cytochrome c oxidoreductase (cytochrome b-c1 complex, complex III, CIII) and cytochrome c oxidase (complex IV, CIV), that cooperate to transfer electrons derived from NADH and succinate to molecular oxygen, creating an electrochemical gradient over the inner membrane that drives transmembrane transport and the ATP synthase. Cytochrome c oxidase is the component of the respiratory chain that catalyzes the reduction of oxygen to water. Electrons originating from reduced cytochrome c in the intermembrane space (IMS) are transferred via the dinuclear copper A center (CU(A)) of subunit 2 and heme A of subunit 1 to the active site in subunit 1, a binuclear center (BNC) formed by heme A3 and copper B (CU(B)). The BNC reduces molecular oxygen to 2 water molecules using 4 electrons from cytochrome c in the IMS and 4 protons from the mitochondrial matrix. The chain is Cytochrome c oxidase subunit 3 (COIII) from Trypanoplasma borreli.